A 267-amino-acid chain; its full sequence is 3-methyl-2-oxobutanoate hydroxymethyltransferase (267 aa).

Positions 46 and 85 each coordinate Mg(2+). Residues 46–47 (DS), D85, and K115 contribute to the 3-methyl-2-oxobutanoate site. E117 serves as a coordination point for Mg(2+). Residue E184 is the Proton acceptor of the active site.

The protein belongs to the PanB family. As to quaternary structure, homodecamer; pentamer of dimers. It depends on Mg(2+) as a cofactor.

The protein localises to the cytoplasm. The catalysed reaction is 3-methyl-2-oxobutanoate + (6R)-5,10-methylene-5,6,7,8-tetrahydrofolate + H2O = 2-dehydropantoate + (6S)-5,6,7,8-tetrahydrofolate. The protein operates within cofactor biosynthesis; (R)-pantothenate biosynthesis; (R)-pantoate from 3-methyl-2-oxobutanoate: step 1/2. Catalyzes the reversible reaction in which hydroxymethyl group from 5,10-methylenetetrahydrofolate is transferred onto alpha-ketoisovalerate to form ketopantoate. The sequence is that of 3-methyl-2-oxobutanoate hydroxymethyltransferase from Citrifermentans bemidjiense (strain ATCC BAA-1014 / DSM 16622 / JCM 12645 / Bem) (Geobacter bemidjiensis).